The chain runs to 396 residues: Elongation factor Tu (396 aa).

The tr-type G domain occupies 10-205; that stretch reads KSHANIGTIG…AVDEYIPTPE (196 aa). Residues 19-26 form a G1 region; it reads GHVDHGKT. A GTP-binding site is contributed by 19–26; that stretch reads GHVDHGKT. Residue Thr-26 participates in Mg(2+) binding. The tract at residues 61–65 is G2; that stretch reads GITIS. Positions 82-85 are G3; sequence DCPG. GTP-binding positions include 82–86 and 137–140; these read DCPGH and NKCD. Residues 137–140 are G4; sequence NKCD. The G5 stretch occupies residues 175–177; that stretch reads SAL.

Belongs to the TRAFAC class translation factor GTPase superfamily. Classic translation factor GTPase family. EF-Tu/EF-1A subfamily. As to quaternary structure, monomer.

The protein resides in the cytoplasm. It catalyses the reaction GTP + H2O = GDP + phosphate + H(+). GTP hydrolase that promotes the GTP-dependent binding of aminoacyl-tRNA to the A-site of ribosomes during protein biosynthesis. This chain is Elongation factor Tu, found in Bacillus licheniformis (strain ATCC 14580 / DSM 13 / JCM 2505 / CCUG 7422 / NBRC 12200 / NCIMB 9375 / NCTC 10341 / NRRL NRS-1264 / Gibson 46).